Reading from the N-terminus, the 635-residue chain is Peptidyl-prolyl cis-trans isomerase PASTICCINO1 (635 aa).

Over residues 1–10 (MAVGDQTEQN) the composition is skewed to polar residues. Residues 1–28 (MAVGDQTEQNYLPKKKKSETEDDKRRKK) are disordered. 3 consecutive PPIase FKBP-type domains span residues 51 to 147 (GDQV…LDFS), 175 to 260 (PYEV…VHFI), and 291 to 383 (DSRL…LGFE). TPR repeat units follow at residues 400-433 (ADKI…FNHV), 449-482 (NMLH…KPGH), and 483-516 (VKGL…DKSS). The calmodulin-binding stretch occupies residues 530–546 (KEQEAESKARKQFKGLF). Over residues 569 to 586 (EVDETKDNDDDETLEEEG) the composition is skewed to acidic residues. The interval 569–593 (EVDETKDNDDDETLEEEGATTVSTE) is disordered. A helical; Anchor for type IV membrane protein transmembrane segment spans residues 609-629 (VMLQIGIQLGVVLIGILIFQF).

The protein belongs to the FKBP-type PPIase family. In terms of assembly, interacts with calmodulin (CaM). Interacts with RPM1 and NAC089. Interacts with the elongase complex core members KCR1, PAS2 and CER10. In terms of tissue distribution, expressed ubiquitously.

The protein resides in the endoplasmic reticulum membrane. Its subcellular location is the cytoplasm. The protein localises to the nucleus. It catalyses the reaction [protein]-peptidylproline (omega=180) = [protein]-peptidylproline (omega=0). In terms of biological role, PPIases accelerate the folding of proteins. It catalyzes the cis-trans isomerization of proline imidic peptide bonds in oligopeptides. Essential protein regulating cell division, adhesion and elongation throughout the plant development and embryogenesis. Required for the spatial organization of apical meristems. Involved in the hormonal control of cell division and differentiation mediated by cytokinins and auxin. Regulates the function of NAC089 transcription factor by controlling its targeting to the nucleus upon plant cell division. Interacts with enzymes of the fatty acid elongase complex and favors the generation of very-long-chain fatty acids (VLCFAs) required for polar auxin transport and tissue patterning during plant development. This is Peptidyl-prolyl cis-trans isomerase PASTICCINO1 (PAS1) from Arabidopsis thaliana (Mouse-ear cress).